We begin with the raw amino-acid sequence, 213 residues long: High frequency lysogenization protein HflD (213 aa).

Positions 99–126 (LSSAKGALDTLGNRINGLQRQLEHFDLQ) form a coiled coil.

This sequence belongs to the HflD family. In terms of assembly, interacts with CII protein from phage lambda.

It localises to the cytoplasm. The protein resides in the cell inner membrane. In terms of biological role, negative regulator of phage lambda lysogenization. Contributes to the degradation of the phage regulatory protein CII. Acts probably by holding CII on the membrane surface, away from the target promoters, but close to the FtsH protease. This chain is High frequency lysogenization protein HflD, found in Escherichia coli O157:H7.